We begin with the raw amino-acid sequence, 361 residues long: Glutaminyl-peptide cyclotransferase (361 aa).

The N-terminal stretch at 1–28 (MAGCRDPRVVDTLHLLLLVAVLPLAVSG) is a signal peptide. N-linked (GlcNAc...) asparagine glycosylation occurs at N49. C139 and C164 are joined by a disulfide. D159 is a Zn(2+) binding site. N183 carries N-linked (GlcNAc...) asparagine glycosylation. Catalysis depends on E201, which acts as the Proton acceptor. E202 serves as a coordination point for Zn(2+). Residue D248 is the Proton acceptor of the active site. A Zn(2+)-binding site is contributed by H330.

This sequence belongs to the glutaminyl-peptide cyclotransferase family. Expressed mainly in brain tissue.

The protein resides in the secreted. It catalyses the reaction N-terminal L-glutaminyl-[peptide] = N-terminal 5-oxo-L-prolyl-[peptide] + NH4(+). Functionally, responsible for the biosynthesis of pyroglutamyl peptides. Has a bias against acidic and tryptophan residues adjacent to the N-terminal glutaminyl residue and a lack of importance of chain length after the second residue. Also catalyzes N-terminal pyroglutamate formation. The sequence is that of Glutaminyl-peptide cyclotransferase (QPCT) from Bos taurus (Bovine).